An 88-amino-acid polypeptide reads, in one-letter code: Large ribosomal subunit protein bL27 (88 aa).

The disordered stretch occupies residues 1 to 25; sequence MAHKKGASSSSNGRDSEAKRLGVKR.

It belongs to the bacterial ribosomal protein bL27 family.

This chain is Large ribosomal subunit protein bL27, found in Corynebacterium diphtheriae (strain ATCC 700971 / NCTC 13129 / Biotype gravis).